Here is a 222-residue protein sequence, read N- to C-terminus: Probable transaldolase (222 aa).

Lys-91 functions as the Schiff-base intermediate with substrate in the catalytic mechanism.

Belongs to the transaldolase family. Type 3B subfamily.

The protein resides in the cytoplasm. It carries out the reaction D-sedoheptulose 7-phosphate + D-glyceraldehyde 3-phosphate = D-erythrose 4-phosphate + beta-D-fructose 6-phosphate. It functions in the pathway carbohydrate degradation; pentose phosphate pathway; D-glyceraldehyde 3-phosphate and beta-D-fructose 6-phosphate from D-ribose 5-phosphate and D-xylulose 5-phosphate (non-oxidative stage): step 2/3. Transaldolase is important for the balance of metabolites in the pentose-phosphate pathway. The polypeptide is Probable transaldolase (Chlorobium chlorochromatii (strain CaD3)).